A 123-amino-acid chain; its full sequence is Fluoride-specific ion channel FluC 1 (123 aa).

4 consecutive transmembrane segments (helical) span residues 1-21, 34-54, 59-79, and 99-119; these read MVDL…RYTL, PLAT…LYGF, VIWL…STYI, and LTSI…ANFF. Na(+) is bound by residues Gly-70 and Thr-73.

It belongs to the fluoride channel Fluc/FEX (TC 1.A.43) family.

It localises to the cell membrane. The catalysed reaction is fluoride(in) = fluoride(out). With respect to regulation, na(+) is not transported, but it plays an essential structural role and its presence is essential for fluoride channel function. In terms of biological role, fluoride-specific ion channel. Important for reducing fluoride concentration in the cell, thus reducing its toxicity. The polypeptide is Fluoride-specific ion channel FluC 1 (Carboxydothermus hydrogenoformans (strain ATCC BAA-161 / DSM 6008 / Z-2901)).